A 475-amino-acid chain; its full sequence is Cytochrome P450 monooxygenase sthD (475 aa).

A signal peptide spans 1 to 17; it reads MAAYFLLGLYGSTLVYR. The helical transmembrane segment at 276 to 296 threads the bilayer; sequence FIIIAGSDTVAATLTFAFFYL. Residue Asn-336 is glycosylated (N-linked (GlcNAc...) asparagine). Cys-418 serves as a coordination point for heme.

The protein belongs to the cytochrome P450 family. Heme is required as a cofactor.

It localises to the membrane. The enzyme catalyses betaenone A + NADPH + O2 + H(+) = stemphyloxin II + NADP(+) + H2O. It carries out the reaction betaenone C + NADPH + O2 + H(+) = stemphyloxin I + NADP(+) + H2O. It functions in the pathway mycotoxin biosynthesis. Its function is as follows. Cytochrome P450 monooxygenase; part of the gene cluster that mediates the biosynthesis of the phytotoxin stemphyloxin II. The first step of the pathway is the synthesis of dehydroprobetaenone I by the polyketide synthase sthA and the enoyl reductase sthE via condensation of one acetyl-CoA starter unit with 7 malonyl-CoA units and 5 methylations. The C-terminal reductase (R) domain of sthA catalyzes the reductive release of the polyketide chain. Because sthA lacks a designated enoylreductase (ER) domain, the required activity is provided the enoyl reductase sthE. The short-chain dehydrogenase/reductase sthC then catalyzes reduction of dehydroprobetaenone I to probetaenone I. The cytochrome P450 monooxygenase sthF catalyzes successive epoxidation, oxidation (resulting from epoxide opening) and hydroxylation to install a tertiary alcohol in the decaline ring to yield betaenone C from dehydroprobetaenone I and betaenone B from probetaenone I. The FAD-linked oxidoreductase sthB is responsible for the conversion of betaenone C to betaenone A via an intramolecular aldol reaction between C-1 and C-17 to form the bridged tricyclic system in betaenone A. Finally, the cytochrome P450 monooxygenase sthD catalyzes the hydroxylation of C-15 to afford the final metabolite stemphyloxin II. This Phaeosphaeria nodorum (strain SN15 / ATCC MYA-4574 / FGSC 10173) (Glume blotch fungus) protein is Cytochrome P450 monooxygenase sthD.